Consider the following 663-residue polypeptide: DNA ligase (663 aa).

NAD(+)-binding positions include 33-37 (DYSYD), 82-83 (SI), and glutamate 112. Lysine 114 functions as the N6-AMP-lysine intermediate in the catalytic mechanism. Residues arginine 135, glutamate 171, lysine 285, and lysine 309 each coordinate NAD(+). 4 residues coordinate Zn(2+): cysteine 403, cysteine 406, cysteine 419, and cysteine 424. The BRCT domain maps to 581 to 663 (DKEAPLQGKV…LRILDAKSVS (83 aa)).

The protein belongs to the NAD-dependent DNA ligase family. LigA subfamily. Mg(2+) is required as a cofactor. Mn(2+) serves as cofactor.

The enzyme catalyses NAD(+) + (deoxyribonucleotide)n-3'-hydroxyl + 5'-phospho-(deoxyribonucleotide)m = (deoxyribonucleotide)n+m + AMP + beta-nicotinamide D-nucleotide.. Its function is as follows. DNA ligase that catalyzes the formation of phosphodiester linkages between 5'-phosphoryl and 3'-hydroxyl groups in double-stranded DNA using NAD as a coenzyme and as the energy source for the reaction. It is essential for DNA replication and repair of damaged DNA. The chain is DNA ligase from Chlamydia trachomatis serovar A (strain ATCC VR-571B / DSM 19440 / HAR-13).